We begin with the raw amino-acid sequence, 375 residues long: Queuine tRNA-ribosyltransferase (375 aa).

The Proton acceptor role is filled by Asp-94. Substrate-binding positions include 94-98 (DSGGF), Asp-148, Gln-191, and Gly-218. The interval 249–255 (GVGSPDD) is RNA binding. The active-site Nucleophile is the Asp-268. The tract at residues 273-277 (TRIAR) is RNA binding; important for wobble base 34 recognition. Zn(2+) contacts are provided by Cys-306, Cys-308, Cys-311, and His-337.

It belongs to the queuine tRNA-ribosyltransferase family. As to quaternary structure, homodimer. Within each dimer, one monomer is responsible for RNA recognition and catalysis, while the other monomer binds to the replacement base PreQ1. Zn(2+) serves as cofactor.

The catalysed reaction is 7-aminomethyl-7-carbaguanine + guanosine(34) in tRNA = 7-aminomethyl-7-carbaguanosine(34) in tRNA + guanine. It participates in tRNA modification; tRNA-queuosine biosynthesis. Its function is as follows. Catalyzes the base-exchange of a guanine (G) residue with the queuine precursor 7-aminomethyl-7-deazaguanine (PreQ1) at position 34 (anticodon wobble position) in tRNAs with GU(N) anticodons (tRNA-Asp, -Asn, -His and -Tyr). Catalysis occurs through a double-displacement mechanism. The nucleophile active site attacks the C1' of nucleotide 34 to detach the guanine base from the RNA, forming a covalent enzyme-RNA intermediate. The proton acceptor active site deprotonates the incoming PreQ1, allowing a nucleophilic attack on the C1' of the ribose to form the product. After dissociation, two additional enzymatic reactions on the tRNA convert PreQ1 to queuine (Q), resulting in the hypermodified nucleoside queuosine (7-(((4,5-cis-dihydroxy-2-cyclopenten-1-yl)amino)methyl)-7-deazaguanosine). The sequence is that of Queuine tRNA-ribosyltransferase from Thermoanaerobacter pseudethanolicus (strain ATCC 33223 / 39E) (Clostridium thermohydrosulfuricum).